The following is a 499-amino-acid chain: Glutamate--tRNA ligase (499 aa).

The short motif at 12-22 (PSPTGHLHIGN) is the 'HIGH' region element. The 'KMSKS' region signature appears at 259 to 263 (KLSKR). Lys262 contributes to the ATP binding site.

This sequence belongs to the class-I aminoacyl-tRNA synthetase family. Glutamate--tRNA ligase type 1 subfamily. Monomer.

The protein localises to the cytoplasm. The catalysed reaction is tRNA(Glu) + L-glutamate + ATP = L-glutamyl-tRNA(Glu) + AMP + diphosphate. Its function is as follows. Catalyzes the attachment of glutamate to tRNA(Glu) in a two-step reaction: glutamate is first activated by ATP to form Glu-AMP and then transferred to the acceptor end of tRNA(Glu). The sequence is that of Glutamate--tRNA ligase from Lactobacillus acidophilus (strain ATCC 700396 / NCK56 / N2 / NCFM).